The sequence spans 356 residues: Inositol monophosphatase 3 (356 aa).

A helical membrane pass occupies residues 11 to 31; the sequence is LGIGVFCLLGLGVLYHVYSGF. Residues E127, D167, L169, D170, and D293 each coordinate Mg(2+). E127 is a substrate binding site. Residues 169 to 172 and D293 contribute to the substrate site; that span reads LDAT.

Belongs to the inositol monophosphatase superfamily. Requires Mg(2+) as cofactor.

The protein resides in the membrane. It catalyses the reaction a myo-inositol phosphate + H2O = myo-inositol + phosphate. It functions in the pathway polyol metabolism; myo-inositol biosynthesis; myo-inositol from D-glucose 6-phosphate: step 2/2. This Xenopus tropicalis (Western clawed frog) protein is Inositol monophosphatase 3 (bpnt2).